Consider the following 37-residue polypeptide: Large ribosomal subunit protein bL36 (37 aa).

This sequence belongs to the bacterial ribosomal protein bL36 family.

This Mycoplasma genitalium (strain ATCC 33530 / DSM 19775 / NCTC 10195 / G37) (Mycoplasmoides genitalium) protein is Large ribosomal subunit protein bL36.